The following is a 439-amino-acid chain: Mitochondrial distribution and morphology protein 12 (439 aa).

In terms of domain architecture, SMP-LTD spans Met1–Ile439. Disordered regions lie at residues Tyr70 to Pro103, Gly185 to Met274, and Pro354 to Gly386. The span at Thr78–Ser91 shows a compositional bias: basic and acidic residues. A compositionally biased stretch (polar residues) spans Asp215–Thr245. Basic and acidic residues-rich tracts occupy residues Arg247 to Asp261 and Ser362 to Ser371.

It belongs to the MDM12 family. In terms of assembly, component of the ER-mitochondria encounter structure (ERMES) or MDM complex, composed of mmm1, mdm10, mdm12 and mdm34. A mmm1 homodimer associates with one molecule of mdm12 on each side in a pairwise head-to-tail manner, and the SMP-LTD domains of mmm1 and mdm12 generate a continuous hydrophobic tunnel for phospholipid trafficking.

Its subcellular location is the mitochondrion outer membrane. It is found in the endoplasmic reticulum membrane. Its function is as follows. Component of the ERMES/MDM complex, which serves as a molecular tether to connect the endoplasmic reticulum (ER) and mitochondria. Components of this complex are involved in the control of mitochondrial shape and protein biogenesis, and function in nonvesicular lipid trafficking between the ER and mitochondria. Mdm12 is required for the interaction of the ER-resident membrane protein mmm1 and the outer mitochondrial membrane-resident beta-barrel protein mdm10. The mdm12-mmm1 subcomplex functions in the major beta-barrel assembly pathway that is responsible for biogenesis of all mitochondrial outer membrane beta-barrel proteins, and acts in a late step after the SAM complex. The mdm10-mdm12-mmm1 subcomplex further acts in the TOM40-specific pathway after the action of the mdm12-mmm1 complex. Essential for establishing and maintaining the structure of mitochondria and maintenance of mtDNA nucleoids. This chain is Mitochondrial distribution and morphology protein 12, found in Aspergillus fumigatus (strain CBS 144.89 / FGSC A1163 / CEA10) (Neosartorya fumigata).